The sequence spans 658 residues: Gametogenetin (658 aa).

Disordered stretches follow at residues 1–268 (MGNV…ASGG) and 285–584 (KQGP…SNKG). The span at 14–30 (SRKEQASDRASDSRRTP) shows a compositional bias: basic and acidic residues. Residues 54 to 83 (PGSSGPPGLLIPPESQASSSTLPLTLELPS) show a composition bias toward low complexity. Residues 127 to 491 (RGLLEASHRG…APTPPSTLSP (365 aa)) form an interaction with GGNBP1 region. Pro residues predominate over residues 163–188 (PAPPPTPLEPRKQLPPAPSTCDPQPP). The span at 194–204 (LASSATSPTES) shows a compositional bias: polar residues. The span at 252 to 264 (SSSGPLAAKASLG) shows a compositional bias: low complexity. The residue at position 384 (serine 384) is a Phosphoserine. A compositionally biased stretch (low complexity) spans 398–409 (PRRPTPALLAPP). A compositionally biased stretch (pro residues) spans 423–460 (RPVPPSPQQIPPLPPPPPTPPATPPPAPPPTPQPPALP). Positions 489 to 516 (LSPTAAAEQAPAPTPAPVTSQVPATTTA) are enriched in low complexity. Residues 496–658 (EQAPAPTPAP…HYDLQATHST (163 aa)) form an interactions with ZNF403/GGNBP2 and OAZ3 region. Positions 527-536 (IRTRRNKGPR) are enriched in basic residues.

In terms of assembly, interacts with FANCL, GGNBP1 and ZNF403/GGNBP2.

Its function is as follows. May be involved in spermatogenesis. This is Gametogenetin (Ggn) from Rattus norvegicus (Rat).